A 24-amino-acid polypeptide reads, in one-letter code: Chaperonin GroEL (24 aa).

It belongs to the chaperonin (HSP60) family. As to quaternary structure, forms a cylinder of 14 subunits composed of two heptameric rings stacked back-to-back. Interacts with the co-chaperonin GroES.

The protein resides in the cytoplasm. The enzyme catalyses ATP + H2O + a folded polypeptide = ADP + phosphate + an unfolded polypeptide.. Its function is as follows. Together with its co-chaperonin GroES, plays an essential role in assisting protein folding. The GroEL-GroES system forms a nano-cage that allows encapsulation of the non-native substrate proteins and provides a physical environment optimized to promote and accelerate protein folding. The polypeptide is Chaperonin GroEL (Acinetobacter calcoaceticus).